Consider the following 211-residue polypeptide: Thymidylate kinase (211 aa).

ATP is bound at residue 10–17; sequence GLDGSGKT.

Belongs to the thymidylate kinase family.

It carries out the reaction dTMP + ATP = dTDP + ADP. Phosphorylation of dTMP to form dTDP in both de novo and salvage pathways of dTTP synthesis. In Blochmanniella floridana, this protein is Thymidylate kinase.